An 855-amino-acid polypeptide reads, in one-letter code: Mitofusin FZO1 (855 aa).

Over residues 1–19 (MSEGKQQFKDSNKPHKDST) the composition is skewed to basic and acidic residues. The interval 1–27 (MSEGKQQFKDSNKPHKDSTDQDDDAAT) is disordered. Topologically, residues 1-705 (MSEGKQQFKD…PSLLFTSKIP (705 aa)) are cytoplasmic. An HRN region spans residues 91–190 (NYNNNRVLLK…KRVDDVSSKV (100 aa)). A Dynamin-type G domain is found at 184-467 (DDVSSKVFIT…KKRSLSKLLP (284 aa)). GTP is bound by residues 197-202 (NTGKSA) and 370-373 (KKFD). A Glycyl lysine isopeptide (Lys-Gly) (interchain with G-Cter in ubiquitin) cross-link involves residue K398. Residue S408 coordinates GTP. Residues 413 to 433 (ELPHYHNENDNEDHGDRKPDD) are compositionally biased toward basic and acidic residues. A disordered region spans residues 413 to 447 (ELPHYHNENDNEDHGDRKPDDDPYSSSDPDPDFDS). K464 participates in a covalent cross-link: Glycyl lysine isopeptide (Lys-Gly) (interchain with G-Cter in ubiquitin). Residues 484 to 547 (KSNMKMYSEE…KEALLNALDV (64 aa)) are HR1. The tract at residues 630 to 843 (GKRLKVSLSI…QSLYEGTVAQ (214 aa)) is required for interaction with UGO1. The helical transmembrane segment at 706 to 726 (TLTLYFLGSTKVVGNIILNGI) threads the bilayer. Residues 727–736 (KLSSWSSLKK) are Mitochondrial intermembrane-facing. Residues 737–757 (LSVPVIVVGSLLGLTYLIHDL) traverse the membrane as a helical segment. Residues 758–855 (PRALPMNLSI…MVEEINLDID (98 aa)) are Cytoplasmic-facing. Positions 769-831 (YKRKLQELDY…KKESNLLSIK (63 aa)) are HR2. The stretch at 798-825 (TREILRSCEIIMDKKQITKKELENKKES) forms a coiled coil.

It belongs to the TRAFAC class dynamin-like GTPase superfamily. Dynamin/Fzo/YdjA family. Mitofusin subfamily. Homodimer. Dimerization depends on GTP binding. Component of a large multiprotein complex of 800 kDa. Binds the cytoplasmic domain of UGO1 which binds MGM1 through its intermembrane space domain. Interacts with MDM30. Interacts with UBP2 and UBP12. Interacts (when ubiquitinated) with DOA1; the interaction recruits FZO1 to CDC48 and promotes FZO1 proteasomal degradation. In terms of processing, ubiquitinated at Lys-398 and Lys-464. MDM30 and UGO1 are involved in ubiquitination. Deubiquitinated by UBP2 and UBP12. UBP2 and UBP12 recognize distinct ubiquitin chains on FZO1 that have opposing effects on mitochondrial fusion. UBP2 removes ubiquitin chains that initiate proteolysis of FZO1 and inhibit fusion. UBP12 recognizes ubiquitin chains that stabilize FZO1 and promote mitochondrial fusion. UBP12 deubiquitylates FZO1 only after oligomerization.

It localises to the mitochondrion outer membrane. The catalysed reaction is GTP + H2O = GDP + phosphate + H(+). Functionally, essential transmembrane GTPase, which mediates mitochondrial fusion. Fusion proceeds through several steps; first mitochondria are tethered together, then brought into close contact, followed by the formation of a docking ring around contact areas, and finally membrane fusion. Fusion of mitochondria occurs in many cell types and constitutes an important step in mitochondrial morphology, which is balanced between fusion and fission, mediated by FZO1 and DNM1, respectively. Functions antagonistically with DNM1. Probably acts by forming membrane contact sites that mediate mitochondrial membrane fusion. Mitochondrial docking and fusion requires GTP hydrolysis. Mitochondrial fusion also promotes increased lifespan. This Saccharomyces cerevisiae (strain ATCC 204508 / S288c) (Baker's yeast) protein is Mitofusin FZO1 (FZO1).